Reading from the N-terminus, the 137-residue chain is Holo-[acyl-carrier-protein] synthase (137 aa).

2 residues coordinate Mg(2+): D8 and E61.

The protein belongs to the P-Pant transferase superfamily. AcpS family. Mg(2+) serves as cofactor.

The protein localises to the cytoplasm. The enzyme catalyses apo-[ACP] + CoA = holo-[ACP] + adenosine 3',5'-bisphosphate + H(+). Its function is as follows. Transfers the 4'-phosphopantetheine moiety from coenzyme A to a Ser of acyl-carrier-protein. This is Holo-[acyl-carrier-protein] synthase from Afipia carboxidovorans (strain ATCC 49405 / DSM 1227 / KCTC 32145 / OM5) (Oligotropha carboxidovorans).